Consider the following 304-residue polypeptide: Aquaglyceroporin-3 (304 aa).

At 1–68 the chain is on the cytoplasmic side; it reads MQSQPDNVAY…LRLNYRDYMG (68 aa). The helical transmembrane segment at 69–89 threads the bilayer; that stretch reads ELLGTFVLLFMGNGVVATVII. Topologically, residues 90 to 95 are extracellular; the sequence is DGKLGF. A helical membrane pass occupies residues 96–116; it reads LSITLGWGIAVTMALYVSLGI. Topologically, residues 117–142 are cytoplasmic; it reads SSGHLNPAVTVGNAVFGDFPWRKVPG. A helical membrane pass occupies residues 143–163; it reads YIAAQMLGAFLGAACAYGVFA. Residues 164-196 are Extracellular-facing; sequence DLLKAHGGGELIAFGEKGTAGVFSTYPRDSNGL. A helical transmembrane segment spans residues 197 to 217; sequence FSCIFGEFICTAMLLFCVCGI. Over 218-231 the chain is Cytoplasmic; the sequence is FDPNNSPAKGHEPL. The chain crosses the membrane as a helical span at residues 232-252; that stretch reads AVGALVFAIGNNIGYSTGYAI. Topologically, residues 253–277 are extracellular; that stretch reads NPARDFGPRVFSSFLYGGEVFSHAN. Residues 278–298 form a helical membrane-spanning segment; that stretch reads YYFWVPLVIPLFGGIFGLFLY. Residues 299 to 304 are Cytoplasmic-facing; it reads KYFVPH.

The protein belongs to the MIP/aquaporin (TC 1.A.8) family.

The protein resides in the cell membrane. It carries out the reaction glycerol(in) = glycerol(out). It catalyses the reaction H2O(in) = H2O(out). The enzyme catalyses urea(in) = urea(out). Mediates water and glycerol transport across the cell membrane. Permeable to urea. Permeable to methylamine/methylammonium. Permeable to dihydroxyacetone. Permeable to erythritol and ribitol. This Trypanosoma brucei brucei protein is Aquaglyceroporin-3.